The chain runs to 439 residues: 23S rRNA (uracil(1939)-C(5))-methyltransferase RlmD (439 aa).

Residues 1–54 (MTAPVLIESLDQEGRGVAHAEGKVIFIEGALPGEVVTYNAYRRKPSFELAQVGQ) form the TRAM domain. C67, C73, C76, and C155 together coordinate [4Fe-4S] cluster. Positions 264, 293, 298, 314, 342, and 363 each coordinate S-adenosyl-L-methionine. The active-site Nucleophile is C391.

The protein belongs to the class I-like SAM-binding methyltransferase superfamily. RNA M5U methyltransferase family. RlmD subfamily.

The enzyme catalyses uridine(1939) in 23S rRNA + S-adenosyl-L-methionine = 5-methyluridine(1939) in 23S rRNA + S-adenosyl-L-homocysteine + H(+). Functionally, catalyzes the formation of 5-methyl-uridine at position 1939 (m5U1939) in 23S rRNA. The protein is 23S rRNA (uracil(1939)-C(5))-methyltransferase RlmD of Nitrosospira multiformis (strain ATCC 25196 / NCIMB 11849 / C 71).